A 932-amino-acid polypeptide reads, in one-letter code: Isoleucine--tRNA ligase (932 aa).

The 'HIGH' region signature appears at 58 to 68 (PYANGDIHIGH). Glutamate 559 provides a ligand contact to L-isoleucyl-5'-AMP. Positions 600-604 (KMSKS) match the 'KMSKS' region motif. ATP is bound at residue lysine 603. Cysteine 895, cysteine 898, cysteine 915, and cysteine 918 together coordinate Zn(2+).

This sequence belongs to the class-I aminoacyl-tRNA synthetase family. IleS type 1 subfamily. As to quaternary structure, monomer. It depends on Zn(2+) as a cofactor.

It is found in the cytoplasm. It carries out the reaction tRNA(Ile) + L-isoleucine + ATP = L-isoleucyl-tRNA(Ile) + AMP + diphosphate. In terms of biological role, catalyzes the attachment of isoleucine to tRNA(Ile). As IleRS can inadvertently accommodate and process structurally similar amino acids such as valine, to avoid such errors it has two additional distinct tRNA(Ile)-dependent editing activities. One activity is designated as 'pretransfer' editing and involves the hydrolysis of activated Val-AMP. The other activity is designated 'posttransfer' editing and involves deacylation of mischarged Val-tRNA(Ile). The protein is Isoleucine--tRNA ligase of Saccharophagus degradans (strain 2-40 / ATCC 43961 / DSM 17024).